A 600-amino-acid polypeptide reads, in one-letter code: Proline--tRNA ligase (600 aa).

This sequence belongs to the class-II aminoacyl-tRNA synthetase family. ProS type 1 subfamily. Homodimer.

It localises to the cytoplasm. It catalyses the reaction tRNA(Pro) + L-proline + ATP = L-prolyl-tRNA(Pro) + AMP + diphosphate. In terms of biological role, catalyzes the attachment of proline to tRNA(Pro) in a two-step reaction: proline is first activated by ATP to form Pro-AMP and then transferred to the acceptor end of tRNA(Pro). As ProRS can inadvertently accommodate and process non-cognate amino acids such as alanine and cysteine, to avoid such errors it has two additional distinct editing activities against alanine. One activity is designated as 'pretransfer' editing and involves the tRNA(Pro)-independent hydrolysis of activated Ala-AMP. The other activity is designated 'posttransfer' editing and involves deacylation of mischarged Ala-tRNA(Pro). The misacylated Cys-tRNA(Pro) is not edited by ProRS. This is Proline--tRNA ligase from Prochlorococcus marinus (strain MIT 9215).